A 377-amino-acid polypeptide reads, in one-letter code: N5-carboxyaminoimidazole ribonucleotide synthase (377 aa).

ATP is bound by residues Arg93, Lys133, Gly138–Gln144, Glu175–Val178, Glu183, His206, and Asn257–Glu258. The ATP-grasp domain maps to Lys97–Cys287.

Belongs to the PurK/PurT family. As to quaternary structure, homodimer.

It catalyses the reaction 5-amino-1-(5-phospho-beta-D-ribosyl)imidazole + hydrogencarbonate + ATP = 5-carboxyamino-1-(5-phospho-D-ribosyl)imidazole + ADP + phosphate + 2 H(+). It functions in the pathway purine metabolism; IMP biosynthesis via de novo pathway; 5-amino-1-(5-phospho-D-ribosyl)imidazole-4-carboxylate from 5-amino-1-(5-phospho-D-ribosyl)imidazole (N5-CAIR route): step 1/2. In terms of biological role, catalyzes the ATP-dependent conversion of 5-aminoimidazole ribonucleotide (AIR) and HCO(3)(-) to N5-carboxyaminoimidazole ribonucleotide (N5-CAIR). The protein is N5-carboxyaminoimidazole ribonucleotide synthase of Vibrio cholerae serotype O1 (strain ATCC 39315 / El Tor Inaba N16961).